A 174-amino-acid polypeptide reads, in one-letter code: NADH-quinone oxidoreductase subunit B 1 (174 aa).

[4Fe-4S] cluster is bound by residues cysteine 38, cysteine 39, cysteine 104, and cysteine 133.

Belongs to the complex I 20 kDa subunit family. In terms of assembly, NDH-1 is composed of 14 different subunits. Subunits NuoB, C, D, E, F, and G constitute the peripheral sector of the complex. Requires [4Fe-4S] cluster as cofactor.

It localises to the cell membrane. It catalyses the reaction a quinone + NADH + 5 H(+)(in) = a quinol + NAD(+) + 4 H(+)(out). Its function is as follows. NDH-1 shuttles electrons from NADH, via FMN and iron-sulfur (Fe-S) centers, to quinones in the respiratory chain. The immediate electron acceptor for the enzyme in this species is believed to be ubiquinone. Couples the redox reaction to proton translocation (for every two electrons transferred, four hydrogen ions are translocated across the cytoplasmic membrane), and thus conserves the redox energy in a proton gradient. This chain is NADH-quinone oxidoreductase subunit B 1, found in Chloroflexus aggregans (strain MD-66 / DSM 9485).